We begin with the raw amino-acid sequence, 345 residues long: Chorismate synthase (345 aa).

Belongs to the chorismate synthase family. Homotetramer. Requires FMNH2 as cofactor.

The enzyme catalyses 5-O-(1-carboxyvinyl)-3-phosphoshikimate = chorismate + phosphate. Its pathway is metabolic intermediate biosynthesis; chorismate biosynthesis; chorismate from D-erythrose 4-phosphate and phosphoenolpyruvate: step 7/7. The protein is Chorismate synthase (aroC) of Carsonella ruddii (strain PV).